The sequence spans 190 residues: Imidazoleglycerol-phosphate dehydratase (190 aa).

It belongs to the imidazoleglycerol-phosphate dehydratase family.

It localises to the cytoplasm. It catalyses the reaction D-erythro-1-(imidazol-4-yl)glycerol 3-phosphate = 3-(imidazol-4-yl)-2-oxopropyl phosphate + H2O. It participates in amino-acid biosynthesis; L-histidine biosynthesis; L-histidine from 5-phospho-alpha-D-ribose 1-diphosphate: step 6/9. The polypeptide is Imidazoleglycerol-phosphate dehydratase (Campylobacter fetus subsp. fetus (strain 82-40)).